The chain runs to 351 residues: MTKISKIIDELNNQQADAAWITTPLNVYYFTGYRSEPHERLFALLIKKDGKQVLFCPKMEVEEVKASPFTGEIVGYLDTENPFSLYPQTINKLLIESEHLTVARQKQLISGFNVNSFGDVDLTIKQLRNIKSEDEINKIRKAAELADKCIEIGVSYLKESVTEREVVNHIEQTIKQYGVNEMSFDTMVLFGDHAASPHGTPGDRRLKSNEYVLFDLGVIYEHYCSDMTRTIKFGEPSQEAQEIYNIVLEAETSAIQAIKPGIPLKDIDHIARNIISEKGYGEYFPHRLGHGLGLQEHEYQDVSSTNSNLLEAGMVITIEPGIYVPGVAGVRIEDDILVTNEGYEVLTHYEK.

The Mn(2+) site is built by D215, D226, H290, E319, and E333.

Belongs to the peptidase M24B family. It depends on Mn(2+) as a cofactor.

This is an uncharacterized protein from Staphylococcus aureus (strain MRSA252).